The sequence spans 398 residues: Galactose-3-O-sulfotransferase 2 (398 aa).

Residues 1 to 10 (MMSMLGGLQR) are Cytoplasmic-facing. The chain crosses the membrane as a helical; Signal-anchor for type II membrane protein span at residues 11–31 (YFRVILLLLLALTLLLLAGFL). Residues 32–398 (HSDLELDTPL…PLKNIPFLGA (367 aa)) are Lumenal-facing. N-linked (GlcNAc...) asparagine glycans are attached at residues Asn79, Asn132, Asn179, Asn287, Asn330, and Asn360.

It belongs to the galactose-3-O-sulfotransferase family. In terms of tissue distribution, ubiquitous. Detected in heart, stomach, colon, liver and spleen, in epithelial cells lining the lower to middle layer of the crypts in colonic mucosa, hepatocytes surrounding the central vein of the liver, extravillous cytotrophoblasts in the basal plate of the septum of the placenta, renal tubules of the kidney, and neuronal cells of the cerebral cortex.

It localises to the golgi apparatus. The protein localises to the golgi stack membrane. It participates in protein modification; carbohydrate sulfation. Its activity is regulated as follows. Strongly inhibited by Cu(2+) and Zn(2+). Its function is as follows. Transfers a sulfate group to the hydroxyl group at C3 of non-reducing beta-galactosyl residues. Acts both on type 1 (Gal-beta-1,3-GlcNAc) and type 2 (Gal-beta-1,4-GlcNAc) chains with similar efficiency. This Homo sapiens (Human) protein is Galactose-3-O-sulfotransferase 2 (GAL3ST2).